An 81-amino-acid chain; its full sequence is Small ribosomal subunit protein bS16 (81 aa).

It belongs to the bacterial ribosomal protein bS16 family.

This is Small ribosomal subunit protein bS16 from Caldicellulosiruptor saccharolyticus (strain ATCC 43494 / DSM 8903 / Tp8T 6331).